The primary structure comprises 769 residues: 3-O-beta-D-glucopyranosyl-beta-D-glucuronide phosphorylase (769 aa).

Catalysis depends on aspartate 457, which acts as the Proton donor.

This sequence belongs to the glycosyl hydrolase 94 family. As to quaternary structure, homodimer.

The protein resides in the cytoplasm. It carries out the reaction 3-O-beta-D-glucosyl-D-glucuronate + phosphate = aldehydo-D-glucuronate + alpha-D-glucose 1-phosphate. The enzyme catalyses a 3-O-beta-D-glucosyl-beta-D-glucuronoside + phosphate = a beta-D-glucuronoside + alpha-D-glucose 1-phosphate. Functionally, glycoside phosphorylase that catalyzes the reversible phosphorolysis of 3-O-beta-D-glucosyl-D-glucuronate into D-glucuronic acid and alpha-D-glucose 1-phosphate. Cannot phosphorolyze cellobionic acid and laminaribiose. In the reverse direction, using alpha-D-glucose 1-phosphate as a donor substrate, the enzyme acts on D-glucuronate and its artificial derivative p-nitrophenyl-beta-D-glucuronide. The apparent catalytic efficiency towards p-nitrophenyl-beta-D-glucuronide is approximately 5-fold higher than that towards D-glucuronic acid. Is probably involved in the metabolism of oligosaccharides containing the 3-O-beta-D-glucopyranosyl-beta-D-glucuronide structure released from bacterial and plant acidic carbohydrates. In Paenibacillus borealis, this protein is 3-O-beta-D-glucopyranosyl-beta-D-glucuronide phosphorylase.